The following is a 222-amino-acid chain: MAKQDDASIQSPDIGEPPAAAREVFGDRLRLACDYAEFLATAGIERGLLGPREVPRIWERHILNSAVLGEVIDEGCRVVDIGSGAGLPGIPLAIARPDLKVQLLEPLLRRYNFLAEVNSQLNLGCEVVRGRAEDPAVVEALGGADVATSRAVAPLGKLTRWSLPLVKVGGAMKALKGGSVAEELERDAKEIAKAGGGDGTIELVGESKVAEPTHVITIPRIR.

Residues glycine 82, leucine 87, alanine 132–glutamate 133, and arginine 150 contribute to the S-adenosyl-L-methionine site.

It belongs to the methyltransferase superfamily. RNA methyltransferase RsmG family.

The protein resides in the cytoplasm. Specifically methylates the N7 position of guanine in position 518 of 16S rRNA. This chain is Ribosomal RNA small subunit methyltransferase G, found in Corynebacterium jeikeium (strain K411).